A 439-amino-acid polypeptide reads, in one-letter code: Glutamate--tRNA ligase 2 (439 aa).

The 'HIGH' region motif lies at 6-16; sequence PSPTGDMHIGN. A 'KMSKS' region motif is present at residues 232–236; sequence KMSKR. Lysine 235 lines the ATP pocket.

The protein belongs to the class-I aminoacyl-tRNA synthetase family. Glutamate--tRNA ligase type 1 subfamily. As to quaternary structure, monomer.

Its subcellular location is the cytoplasm. It carries out the reaction tRNA(Glu) + L-glutamate + ATP = L-glutamyl-tRNA(Glu) + AMP + diphosphate. Its function is as follows. Catalyzes the attachment of glutamate to tRNA(Glu) in a two-step reaction: glutamate is first activated by ATP to form Glu-AMP and then transferred to the acceptor end of tRNA(Glu). This is Glutamate--tRNA ligase 2 from Helicobacter pylori (strain Shi470).